A 442-amino-acid chain; its full sequence is Putative mannan endo-1,6-alpha-mannosidase C1198.07c (442 aa).

The first 19 residues, 1–19, serve as a signal peptide directing secretion; sequence MRYLSFFFEFFFLFSFAFA. Over 20 to 421 the chain is Lumenal; that stretch reads FDFDVTSDDS…TPATKSDKGW (402 aa). N-linked (GlcNAc...) asparagine glycosylation is found at N75, N124, N193, N229, N254, N257, and N356. Residues 422 to 442 form a helical membrane-spanning segment; sequence AGFLTFAFSFVFLLFSIWLYF.

The protein belongs to the glycosyl hydrolase 76 family.

It is found in the endoplasmic reticulum membrane. The catalysed reaction is Random hydrolysis of (1-&gt;6)-alpha-D-mannosidic linkages in unbranched (1-&gt;6)-mannans.. This Schizosaccharomyces pombe (strain 972 / ATCC 24843) (Fission yeast) protein is Putative mannan endo-1,6-alpha-mannosidase C1198.07c.